The following is a 244-amino-acid chain: Lactate utilization protein A (244 aa).

It belongs to the LutA/YkgE family.

Functionally, is involved in L-lactate degradation and allows cells to grow with lactate as the sole carbon source. The sequence is that of Lactate utilization protein A from Oceanobacillus iheyensis (strain DSM 14371 / CIP 107618 / JCM 11309 / KCTC 3954 / HTE831).